The primary structure comprises 1922 residues: Endoribonuclease Dicer (1922 aa).

Residues 51–227 enclose the Helicase ATP-binding domain; the sequence is LLEAALDHNT…ELEEKIQKLE (177 aa). 64–71 contributes to the ATP binding site; that stretch reads LNTGSGKT. The DECH box signature appears at 175–178; the sequence is DECH. Positions 256–595 are required for interaction with PRKRA and TARBP2; that stretch reads DCGPFTDRSG…LRNKCSKSVD (340 aa). Residues 409–433 form a disordered region; it reads YVSWSDSEDDDEDEEIEEKEKPETN. Residues Ser-413 and Ser-415 each carry the phosphoserine modification. A compositionally biased stretch (acidic residues) spans 414-425; the sequence is DSEDDDEDEEIE. The 170-residue stretch at 433 to 602 folds into the Helicase C-terminal domain; that stretch reads NFPSPFTNIL…SVDTGETDID (170 aa). A Dicer dsRNA-binding fold domain is found at 630–722; the sequence is AIGHINRYCA…MPVGKETVKY (93 aa). The PAZ domain occupies 895-1042; the sequence is KFMEDIEKSE…LVPELCAIHP (148 aa). 2 positions are modified to phosphoserine: Ser-1016 and Ser-1160. The region spanning 1276–1403 is the RNase III 1 domain; the sequence is DSEQSPSIGY…TDKWEKDEMT (128 aa). Residues Glu-1316, Asp-1395, and Glu-1398 each contribute to the Mg(2+) site. A phosphoserine mark is found at Ser-1460, Ser-1468, and Ser-1470. Residues 1666–1824 enclose the RNase III 2 domain; that stretch reads FENFEKKINY…LAGAIYMDSG (159 aa). Mg(2+) is bound by residues Glu-1705, Asp-1810, and Glu-1813. The DRBM domain maps to 1849–1914; the sequence is VPRSPVRELL…ARRALRSLKA (66 aa). At Ser-1868 the chain carries Phosphoserine.

The protein belongs to the helicase family. Dicer subfamily. As to quaternary structure, component of the RISC loading complex (RLC), or micro-RNA (miRNA) loading complex (miRLC), which is composed of DICER1, AGO2 and TARBP2; DICER1 and TARBP2 are required to process precursor miRNAs (pre-miRNAs) to mature miRNAs and then load them onto AGO2. Note that the trimeric RLC/miRLC is also referred to as RISC. Interacts with DHX9, AGO1, PIWIL1 and PRKRA. Associates with the 60S ribosome. Interacts with BCDIN3D. Interacts with AGO2, TARBP2, EIF6, MOV10 and RPL7A (60S ribosome subunit); they form a large RNA-induced silencing complex (RISC). Interacts (via Dicer dsRNA-binding fold domain) with ALOX5 (via PLAT domain); this interaction enhances arachidonate 5-lipoxygenase activity and modifies the miRNA precursor processing activity of DICER1. (Microbial infection) Interacts with ebolavirus transcriptional activator VP30; this interaction prevents TARBP2/TRBP binding to DICER1 and thus allows the virus to counteract host RNA silencing. In terms of assembly, (Microbial infection) Interacts with ebolavirus transcriptional activator VP35; this interaction prevents TARBP2/TRBP binding to DICER1 and thus allows the virus to counteract host RNA silencing. Requires Mg(2+) as cofactor. It depends on Mn(2+) as a cofactor.

The protein resides in the cytoplasm. It localises to the perinuclear region. It catalyses the reaction Endonucleolytic cleavage to 5'-phosphomonoester.. Functionally, double-stranded RNA (dsRNA) endoribonuclease playing a central role in short dsRNA-mediated post-transcriptional gene silencing. Cleaves naturally occurring long dsRNAs and short hairpin pre-microRNAs (miRNA) into fragments of twenty-one to twenty-three nucleotides with 3' overhang of two nucleotides, producing respectively short interfering RNAs (siRNA) and mature microRNAs. SiRNAs and miRNAs serve as guide to direct the RNA-induced silencing complex (RISC) to complementary RNAs to degrade them or prevent their translation. Gene silencing mediated by siRNAs, also called RNA interference, controls the elimination of transcripts from mobile and repetitive DNA elements of the genome but also the degradation of exogenous RNA of viral origin for instance. The miRNA pathway on the other side is a mean to specifically regulate the expression of target genes. This is Endoribonuclease Dicer (DICER1) from Homo sapiens (Human).